The chain runs to 267 residues: Indole-3-glycerol phosphate synthase (267 aa).

The protein belongs to the TrpC family.

It catalyses the reaction 1-(2-carboxyphenylamino)-1-deoxy-D-ribulose 5-phosphate + H(+) = (1S,2R)-1-C-(indol-3-yl)glycerol 3-phosphate + CO2 + H2O. Its pathway is amino-acid biosynthesis; L-tryptophan biosynthesis; L-tryptophan from chorismate: step 4/5. The polypeptide is Indole-3-glycerol phosphate synthase (Ralstonia pickettii (strain 12J)).